The chain runs to 239 residues: Small ribosomal subunit protein uS3 (239 aa).

A KH type-2 domain is found at 40 to 108 (RGLLEKELYS…VALNVQEVQN (69 aa)). Residues 212–239 (KPKARPELPKAEERPRRRRPAVRVKKEE) are disordered. Over residues 215-226 (ARPELPKAEERP) the composition is skewed to basic and acidic residues. The span at 227–239 (RRRRPAVRVKKEE) shows a compositional bias: basic residues.

The protein belongs to the universal ribosomal protein uS3 family. Part of the 30S ribosomal subunit. Forms a tight complex with proteins S10 and S14.

Functionally, binds the lower part of the 30S subunit head. Binds mRNA in the 70S ribosome, positioning it for translation. The sequence is that of Small ribosomal subunit protein uS3 (rpsC) from Thermus thermophilus (strain ATCC BAA-163 / DSM 7039 / HB27).